We begin with the raw amino-acid sequence, 287 residues long: Shikimate dehydrogenase (NADP(+)) (287 aa).

Residues 20-22 (SRS) and Thr67 contribute to the shikimate site. The active-site Proton acceptor is the Lys71. Glu84 is an NADP(+) binding site. Asn93 and Asp108 together coordinate shikimate. NADP(+) is bound by residues 132-136 (GAGGA) and Met226. A shikimate-binding site is contributed by Tyr228. Gly250 serves as a coordination point for NADP(+).

This sequence belongs to the shikimate dehydrogenase family. As to quaternary structure, homodimer.

The enzyme catalyses shikimate + NADP(+) = 3-dehydroshikimate + NADPH + H(+). It functions in the pathway metabolic intermediate biosynthesis; chorismate biosynthesis; chorismate from D-erythrose 4-phosphate and phosphoenolpyruvate: step 4/7. In terms of biological role, involved in the biosynthesis of the chorismate, which leads to the biosynthesis of aromatic amino acids. Catalyzes the reversible NADPH linked reduction of 3-dehydroshikimate (DHSA) to yield shikimate (SA). The sequence is that of Shikimate dehydrogenase (NADP(+)) from Bordetella petrii (strain ATCC BAA-461 / DSM 12804 / CCUG 43448).